Reading from the N-terminus, the 343-residue chain is MRIGVLTGGGDCPGLNAVIRAVVRTCHARYGSSVVGFQNGFRGLLENRRVQLHNDDRNDRLLAKGGTMLGTARVHPDKLRAGLPQIMQTLDDNGIDVLIPIGGEGTLTAASWLSEENVPVVGVPKTIDNDIDCTDVTFGHDTALTVATEAIDRLHSTAESHERVMLVEVMGRHAGWIALNAGLASGAHMTLIPEQPFDIEEVCRLVKGRFQRGDSHFICVVAEGAKPAPGTIMLREGGLDEFGHERFTGVAAQLAVEVEKRINKDVRVTVLGHIQRGGTPTAYDRVLATRFGVNAADAAHAGEYGQMVTLRGQDIGRVPLADAVRKLKLVPQSRYDDAAAFFG.

ATP is bound by residues G10, 73–74, and 103–106; these read RV and GEGT. E104 lines the Mg(2+) pocket. Residues 126–128, R163, 170–172, E223, R267, and 273–276 contribute to the substrate site; these read TID, MGR, and HIQR. Catalysis depends on D128, which acts as the Proton acceptor.

The protein belongs to the phosphofructokinase type A (PFKA) family. Mixed-substrate PFK group III subfamily. In terms of assembly, homodimer or homotetramer. Requires Mg(2+) as cofactor.

The protein resides in the cytoplasm. The enzyme catalyses beta-D-fructose 6-phosphate + ATP = beta-D-fructose 1,6-bisphosphate + ADP + H(+). The catalysed reaction is D-tagatofuranose 6-phosphate + ATP = D-tagatofuranose 1,6-bisphosphate + ADP + H(+). The protein operates within carbohydrate degradation; glycolysis; D-glyceraldehyde 3-phosphate and glycerone phosphate from D-glucose: step 3/4. Functionally, catalyzes the phosphorylation of D-fructose 6-phosphate to fructose 1,6-bisphosphate by ATP, the first committing step of glycolysis. Can also catalyze the phosphorylation of tagatose-6-phosphate. This is ATP-dependent 6-phosphofructokinase from Mycobacterium tuberculosis (strain CDC 1551 / Oshkosh).